A 610-amino-acid chain; its full sequence is Transcription termination factor Rho (610 aa).

The disordered stretch occupies residues 117-227; sequence EVSRRERRGA…GDGAEAELRQ (111 aa). Over residues 118 to 131 the composition is skewed to basic and acidic residues; it reads VSRRERRGASREAD. Residues 178–187 are compositionally biased toward polar residues; sequence GVEQQSSSLQ. The span at 189 to 198 shows a compositional bias: basic and acidic residues; the sequence is RGDDDGEGRQ. Over residues 199-214 the composition is skewed to basic residues; that stretch reads GRRGRRFRDRDRRRRG. The segment covering 215 to 227 has biased composition (basic and acidic residues); sequence ERSGDGAEAELRQ. The Rho RNA-BD domain maps to 231-309; sequence VQPVAGILDV…VRLDSINGGS (79 aa). ATP-binding positions include 352-357, 364-369, and Arg395; these read GKGQRA and KAGKTT.

The protein belongs to the Rho family. Homohexamer. The homohexamer assembles into an open ring structure.

In terms of biological role, facilitates transcription termination by a mechanism that involves Rho binding to the nascent RNA, activation of Rho's RNA-dependent ATPase activity, and release of the mRNA from the DNA template. The protein is Transcription termination factor Rho of Mycobacterium leprae (strain TN).